We begin with the raw amino-acid sequence, 455 residues long: Venom prothrombin activator hopsarin-D (455 aa).

Positions 1–20 (MAPQLLLCLILTFLWSVPEA) are cleaved as a signal peptide. A propeptide spanning residues 21-40 (ESNVFLKSKVANRFLQRTKR) is cleaved from the precursor. The 46-residue stretch at 41 to 86 (SNSLFEEIRPGNIERECIEEKCSKEEAREVFEDNEKTETFWNVYVD) folds into the Gla domain. 4-carboxyglutamate is present on residues glutamate 46, glutamate 47, glutamate 54, glutamate 56, glutamate 59, glutamate 60, glutamate 65, glutamate 66, glutamate 69, glutamate 72, and glutamate 75. A disulfide bond links cysteine 57 and cysteine 62. The EGF-like 1; calcium-binding domain occupies 86 to 121 (DGDQCSSNPCHYHGTCKDGIGSYTCTCLPNYEGKNC). 10 disulfide bridges follow: cysteine 90–cysteine 101, cysteine 95–cysteine 110, cysteine 112–cysteine 121, cysteine 129–cysteine 140, cysteine 136–cysteine 149, cysteine 151–cysteine 164, cysteine 172–cysteine 328, cysteine 236–cysteine 252, cysteine 376–cysteine 390, and cysteine 401–cysteine 429. Serine 92 is a glycosylation site (O-linked (Hex...) serine). The EGF-like 2 domain maps to 129 to 164 (CRAFNGNCWHFCKRVQSETQCSCAESYRLGVDGHSC). The propeptide at 182–209 (REASLPDFVQSQKATLLKKSDNPSPDIR) is activation peptide. The Peptidase S1 domain maps to 210-453 (IVNGMDSKLG…FIPWIKKIMS (244 aa)). Histidine 251 (charge relay system) is an active-site residue. A glycan (N-linked (GlcNAc...) asparagine) is linked at asparagine 254. Catalysis depends on aspartate 308, which acts as the Charge relay system. The active-site Charge relay system is the serine 405.

The protein belongs to the peptidase S1 family. Snake venom subfamily. In terms of assembly, heterodimer of a light chain and a heavy chain; disulfide-linked. In terms of processing, the vitamin K-dependent, enzymatic carboxylation of some glutamate residues allows the modified protein to bind calcium. As to expression, expressed by the venom gland.

The protein localises to the secreted. The catalysed reaction is Selective cleavage of Arg-|-Thr and then Arg-|-Ile bonds in prothrombin to form thrombin.. Its function is as follows. Snake prothrombin activator that attacks the hemostatic system of prey. This protein is functionally similar to blood coagulation factor Xa. The procoagulant activity of hopsarin-D is approximately 10-fold lower than that of trocarin-D and FXa. The sequence is that of Venom prothrombin activator hopsarin-D from Hoplocephalus stephensii (Stephens's banded snake).